Here is a 1451-residue protein sequence, read N- to C-terminus: MWKSRRAQLCLFSVLLAFLPSASSLNGDSKYMVLVPSQLYTETPEKICLHLYHLNETVTVTASLVSQTGRRNLFDELVVDKDLFQCVSFIIPTLNSPDEEEFLYVDIKGPTHEFSKRNAVLVKNKESVVFVQTDKPVYKPGQSVKFRVVSMDKTLRPLNELLPLAYIEDPKKNRIMQWRDIKTENGLKQMSFSLAAEPIQGPYKIVVHKQSGVKEEHSFTVMEFVLPRFNVDLKVPNAISVNDEVLQVTVCGKYTYGKPVPGQVKISICHETEAGCKEVNSKLDNNGCSTQEVNITELQSKKRNYEVQLFHVNATVTEEGTGLEFNGYGTTKIERITNKLIFLKADSHFRHGIPFFVKVRLVDIKGDPIPNERVFIKAQVLGYTSATTTDQHGLAKFSIDTAGFSGSSLHIKVNHKGKDSCYFFYCMEERYASAEHVAYAVYSLSKSYIYLVKETSSILPCNQIHTVQAHFILKGDLGVLKELVFYYLVMAQGSIIQTGNHTHQVEPGEAPVKGNFDLEIPVEFSMAPMAKMLIYTILPDGEVIADSVNFEIEKCLRNKVDLSFSSSQSLPASQTRLQVTASPQSLCGLRAVDQSVLLLKPEDELSPSWIYNLPGMQHNKFIPSSSLSEDREDCILYSSWVAEKHTDWVPHGREKDVYRYVEDMDLKAFTNLKIKLPKICFDSAPMSGPRGKFDLAFSSEVSGTLQKGSSKRPQPEEPPREDPPPKDPLAETIRKYFPETWVWDIVTVNSTGVAEVEMTVPDTITEWKAGALCLSNDTGLGLSSVVPLQAFQPFFVEVSLPYSVVRGEAFMLKATVMNYLPTSMRMSVQLEASPDFTAVPVGDDHDSYCLSANGRHTSSWLVTPKSLGNVNFSVSVEAQQSSEPCGSEVATVPETGRKDTVVKVLIVEPEGIKQEHTFNSLFCASDAEISEKMSLVLPPTVVKDSARAHFSVMGDILSSAIKNTQNLLHMPYGCGEQNMVLFAPNIYVLKYLDKTQQLTQKIKTKALGFLRAGYQRELNYKHKDGSYSAFGDQNGEREGNTWLTAFVLKSFAQARAFIFIDESHITHAFTWLSQQQKDNGCFRSSGSLFHNDIKHPVVSKALSCLESSWKTIEQGRNANFVYTKALMAYAFALAGNQDKRNEILKSLDEEAIKEDNSIHWERPQKPRKSEHNLYKPQASSVEVEMNAYVVLARLTAQPAPSPEDLTLSRSTIMWLTKQQNSNGGFSSTQDTVVALDALSKYGAVTFSRRQKTSLVTIQSTGSFSQKFQVENSNCLLLQQVPLPDIPGDYTISVSGEGCVYAQTTLRYNMHLEKQQSAFALRVQTVPLTCNNPKGHNSFQISLEISYTGSRPASNMVIADVKMLSGFIPLKPTVKKLERLEHISRTEVSNNNVLLYLDQVTNQTLAFSFIIQQDISVRNLQPAIVKVYDYYETDEVAYAEYSSPCSSDKQNV.

Positions 1-27 are cleaved as a signal peptide; the sequence is MWKSRRAQLCLFSVLLAFLPSASSLNG. Disulfide bonds link cysteine 48-cysteine 86, cysteine 251-cysteine 276, and cysteine 269-cysteine 288. An N-linked (GlcNAc...) asparagine glycan is attached at asparagine 55. Asparagine 294, asparagine 313, and asparagine 500 each carry an N-linked (GlcNAc...) asparagine glycan. 3 cysteine pairs are disulfide-bonded: cysteine 461–cysteine 555, cysteine 587–cysteine 773, and cysteine 634–cysteine 680. The tract at residues 677-734 is bait region; the sequence is PKICFDSAPMSGPRGKFDLAFSSEVSGTLQKGSSKRPQPEEPPREDPPPKDPLAETIR. Residues 703 to 728 form a disordered region; that stretch reads GTLQKGSSKRPQPEEPPREDPPPKDP. Over residues 713-728 the composition is skewed to basic and acidic residues; sequence PQPEEPPREDPPPKDP. Asparagine 749, asparagine 776, and asparagine 871 each carry an N-linked (GlcNAc...) asparagine glycan. Intrachain disulfides connect cysteine 849-cysteine 885, cysteine 923-cysteine 1274, cysteine 1081-cysteine 1104, and cysteine 1298-cysteine 1444. The segment at residues 974–977 is a cross-link (isoglutamyl cysteine thioester (Cys-Gln)); sequence CGEQ. An N-linked (GlcNAc...) asparagine glycan is attached at asparagine 1401.

It belongs to the protease inhibitor I39 (alpha-2-macroglobulin) family. Monomer. In terms of tissue distribution, plasma.

It localises to the secreted. Its function is as follows. A proteinase activates the inhibitor by specific proteolysis in the bait region, which, by an unknown mechanism leads to reaction at the cysteinyl-glutamyl internal thiol ester site and to a conformational change, whereby the proteinase is trapped and/or covalently bound to the inhibitor. While in the tetrameric proteinase inhibitors steric inhibition is sufficiently strong, monomeric forms need a covalent linkage between the activated glutamyl residue of the original thiol ester and a terminal amino group of a lysine or another nucleophilic group on the proteinase, for inhibition to be effective. The chain is Murinoglobulin-2 (Mug2) from Mus musculus (Mouse).